The primary structure comprises 165 residues: Small ribosomal subunit protein uS5 (165 aa).

An S5 DRBM domain is found at 10–73; the sequence is LNEKLIAVNR…EKARRNMVTV (64 aa).

This sequence belongs to the universal ribosomal protein uS5 family. As to quaternary structure, part of the 30S ribosomal subunit. Contacts proteins S4 and S8.

Functionally, with S4 and S12 plays an important role in translational accuracy. Its function is as follows. Located at the back of the 30S subunit body where it stabilizes the conformation of the head with respect to the body. The sequence is that of Small ribosomal subunit protein uS5 from Photobacterium profundum (strain SS9).